Here is a 1400-residue protein sequence, read N- to C-terminus: DNA-directed RNA polymerase subunit beta' (1400 aa).

Zn(2+) contacts are provided by Cys-70, Cys-72, Cys-85, and Cys-88. The Mg(2+) site is built by Asp-460, Asp-462, and Asp-464. Residues Cys-814, Cys-887, Cys-894, and Cys-897 each coordinate Zn(2+).

It belongs to the RNA polymerase beta' chain family. As to quaternary structure, the RNAP catalytic core consists of 2 alpha, 1 beta, 1 beta' and 1 omega subunit. When a sigma factor is associated with the core the holoenzyme is formed, which can initiate transcription. It depends on Mg(2+) as a cofactor. Requires Zn(2+) as cofactor.

It carries out the reaction RNA(n) + a ribonucleoside 5'-triphosphate = RNA(n+1) + diphosphate. DNA-dependent RNA polymerase catalyzes the transcription of DNA into RNA using the four ribonucleoside triphosphates as substrates. The protein is DNA-directed RNA polymerase subunit beta' of Marinomonas sp. (strain MWYL1).